Here is a 164-residue protein sequence, read N- to C-terminus: uncharacterized protein (164 aa).

Residues 1-29 (MLCVRSSSSNLESDTYLSRYSTRASAGTG) are compositionally biased toward polar residues. The segment at 1–62 (MLCVRSSSSN…SKPSNNKNID (62 aa)) is disordered. Low complexity predominate over residues 43–62 (SSDSSSSSSESKPSNNKNID).

This is an uncharacterized protein from Schizosaccharomyces pombe (strain 972 / ATCC 24843) (Fission yeast).